A 478-amino-acid chain; its full sequence is Trigger factor (478 aa).

Residues 154–167 show a composition bias toward basic and acidic residues; the sequence is MAKDSRSFEPREEG. Disordered stretches follow at residues 154–173 and 441–478; these read MAKD…AQSG and KEAL…KAAG. Residues 173-258 enclose the PPIase FKBP-type domain; sequence GDRVTIDFVG…VKAVAAPGET (86 aa).

Belongs to the FKBP-type PPIase family. Tig subfamily.

It localises to the cytoplasm. It catalyses the reaction [protein]-peptidylproline (omega=180) = [protein]-peptidylproline (omega=0). Involved in protein export. Acts as a chaperone by maintaining the newly synthesized protein in an open conformation. Functions as a peptidyl-prolyl cis-trans isomerase. This Methylorubrum extorquens (strain CM4 / NCIMB 13688) (Methylobacterium extorquens) protein is Trigger factor.